Reading from the N-terminus, the 399-residue chain is Formate-dependent phosphoribosylglycinamide formyltransferase (399 aa).

N(1)-(5-phospho-beta-D-ribosyl)glycinamide contacts are provided by residues 8–9 and Glu68; that span reads EL. ATP contacts are provided by residues Arg100, Lys141, 146–151, 185–188, and Glu193; these read SSGHGQ and EALA. Residues 105–308 form the ATP-grasp domain; that stretch reads VLAHEELGLP…EFALHARAIL (204 aa). Glu266 and Glu279 together coordinate Mg(2+). N(1)-(5-phospho-beta-D-ribosyl)glycinamide is bound by residues Asp286, Lys361, and 368–369; that span reads RR.

The protein belongs to the PurK/PurT family. As to quaternary structure, homodimer.

It catalyses the reaction N(1)-(5-phospho-beta-D-ribosyl)glycinamide + formate + ATP = N(2)-formyl-N(1)-(5-phospho-beta-D-ribosyl)glycinamide + ADP + phosphate + H(+). It functions in the pathway purine metabolism; IMP biosynthesis via de novo pathway; N(2)-formyl-N(1)-(5-phospho-D-ribosyl)glycinamide from N(1)-(5-phospho-D-ribosyl)glycinamide (formate route): step 1/1. Its function is as follows. Involved in the de novo purine biosynthesis. Catalyzes the transfer of formate to 5-phospho-ribosyl-glycinamide (GAR), producing 5-phospho-ribosyl-N-formylglycinamide (FGAR). Formate is provided by PurU via hydrolysis of 10-formyl-tetrahydrofolate. The chain is Formate-dependent phosphoribosylglycinamide formyltransferase from Bifidobacterium adolescentis (strain ATCC 15703 / DSM 20083 / NCTC 11814 / E194a).